The following is a 288-amino-acid chain: Phosphate import ATP-binding protein PstB (288 aa).

Residues 42-283 (IRDLNFYYEN…PKEKKTRDYI (242 aa)) form the ABC transporter domain. 74 to 81 (GPSGCGKS) lines the ATP pocket.

The protein belongs to the ABC transporter superfamily. Phosphate importer (TC 3.A.1.7) family. As to quaternary structure, the complex is composed of two ATP-binding proteins (PstB), two transmembrane proteins (PstC and PstA) and a solute-binding protein (PstS).

Its subcellular location is the cell membrane. It catalyses the reaction phosphate(out) + ATP + H2O = ADP + 2 phosphate(in) + H(+). Part of the ABC transporter complex PstSACB involved in phosphate import. Responsible for energy coupling to the transport system. This is Phosphate import ATP-binding protein PstB from Malacoplasma penetrans (strain HF-2) (Mycoplasma penetrans).